We begin with the raw amino-acid sequence, 363 residues long: UDP-N-acetylglucosamine--N-acetylmuramyl-(pentapeptide) pyrophosphoryl-undecaprenol N-acetylglucosamine transferase (363 aa).

UDP-N-acetyl-alpha-D-glucosamine is bound by residues 14 to 16, Arg171, Ser200, and Gln290; that span reads TGG.

Belongs to the glycosyltransferase 28 family. MurG subfamily.

Its subcellular location is the cell inner membrane. It carries out the reaction di-trans,octa-cis-undecaprenyl diphospho-N-acetyl-alpha-D-muramoyl-L-alanyl-D-glutamyl-meso-2,6-diaminopimeloyl-D-alanyl-D-alanine + UDP-N-acetyl-alpha-D-glucosamine = di-trans,octa-cis-undecaprenyl diphospho-[N-acetyl-alpha-D-glucosaminyl-(1-&gt;4)]-N-acetyl-alpha-D-muramoyl-L-alanyl-D-glutamyl-meso-2,6-diaminopimeloyl-D-alanyl-D-alanine + UDP + H(+). It participates in cell wall biogenesis; peptidoglycan biosynthesis. In terms of biological role, cell wall formation. Catalyzes the transfer of a GlcNAc subunit on undecaprenyl-pyrophosphoryl-MurNAc-pentapeptide (lipid intermediate I) to form undecaprenyl-pyrophosphoryl-MurNAc-(pentapeptide)GlcNAc (lipid intermediate II). The chain is UDP-N-acetylglucosamine--N-acetylmuramyl-(pentapeptide) pyrophosphoryl-undecaprenol N-acetylglucosamine transferase from Borreliella burgdorferi (strain ATCC 35210 / DSM 4680 / CIP 102532 / B31) (Borrelia burgdorferi).